Consider the following 435-residue polypeptide: Trigger factor (435 aa).

The PPIase FKBP-type domain maps to 161–246 (GDKLTLDFTG…IHKTEGPILP (86 aa)).

Belongs to the FKBP-type PPIase family. Tig subfamily.

Its subcellular location is the cytoplasm. It catalyses the reaction [protein]-peptidylproline (omega=180) = [protein]-peptidylproline (omega=0). In terms of biological role, involved in protein export. Acts as a chaperone by maintaining the newly synthesized protein in an open conformation. Functions as a peptidyl-prolyl cis-trans isomerase. The protein is Trigger factor of Colwellia psychrerythraea (strain 34H / ATCC BAA-681) (Vibrio psychroerythus).